A 507-amino-acid chain; its full sequence is Chromosomal replication initiator protein DnaA (507 aa).

The segment at 1–112 (MTDDPGSGFT…PATDEADDTT (112 aa)) is domain I, interacts with DnaA modulators. Residues 99–155 (RIAPPATDEADDTTVPPSENPATTSPDTTTDNDEIDDSAAARGDNQHSWPSYFTERP) are disordered. The span at 113-127 (VPPSENPATTSPDTT) shows a compositional bias: polar residues. Residues 113–166 (VPPSENPATTSPDTTTDNDEIDDSAAARGDNQHSWPSYFTERPHNTDSATAGVT) form a domain II region. The interval 167 to 383 (SLNRRYTFDT…GALIRVTAFA (217 aa)) is domain III, AAA+ region. Residues Gly-211, Gly-213, Lys-214, and Thr-215 each coordinate ATP. Residues 384–507 (SLNKTPIDKA…TTRIRQRSKR (124 aa)) form a domain IV, binds dsDNA region.

Belongs to the DnaA family. Oligomerizes as a right-handed, spiral filament on DNA at oriC.

It is found in the cytoplasm. Plays an essential role in the initiation and regulation of chromosomal replication. ATP-DnaA binds to the origin of replication (oriC) to initiate formation of the DNA replication initiation complex once per cell cycle. Binds the DnaA box (a 9 base pair repeat at the origin) and separates the double-stranded (ds)DNA. Forms a right-handed helical filament on oriC DNA; dsDNA binds to the exterior of the filament while single-stranded (ss)DNA is stabiized in the filament's interior. The ATP-DnaA-oriC complex binds and stabilizes one strand of the AT-rich DNA unwinding element (DUE), permitting loading of DNA polymerase. After initiation quickly degrades to an ADP-DnaA complex that is not apt for DNA replication. Binds acidic phospholipids. The sequence is that of Chromosomal replication initiator protein DnaA from Mycobacterium tuberculosis (strain ATCC 25177 / H37Ra).